A 199-amino-acid polypeptide reads, in one-letter code: dITP/XTP pyrophosphatase (199 aa).

8-13 (TRNKGK) is a binding site for substrate. E41 and D70 together coordinate Mg(2+). D70 acts as the Proton acceptor in catalysis. Substrate is bound by residues S71, 153–156 (FGYD), K176, and 181–182 (HR).

Belongs to the HAM1 NTPase family. Homodimer. It depends on Mg(2+) as a cofactor.

It carries out the reaction XTP + H2O = XMP + diphosphate + H(+). The enzyme catalyses dITP + H2O = dIMP + diphosphate + H(+). It catalyses the reaction ITP + H2O = IMP + diphosphate + H(+). In terms of biological role, pyrophosphatase that catalyzes the hydrolysis of nucleoside triphosphates to their monophosphate derivatives, with a high preference for the non-canonical purine nucleotides XTP (xanthosine triphosphate), dITP (deoxyinosine triphosphate) and ITP. Seems to function as a house-cleaning enzyme that removes non-canonical purine nucleotides from the nucleotide pool, thus preventing their incorporation into DNA/RNA and avoiding chromosomal lesions. In Geobacter sulfurreducens (strain ATCC 51573 / DSM 12127 / PCA), this protein is dITP/XTP pyrophosphatase.